The sequence spans 469 residues: 23S rRNA (uracil(1939)-C(5))-methyltransferase RlmD (469 aa).

The 59-residue stretch at 11–69 folds into the TRAM domain; sequence PKTSNQRLTVTVDKLDMNGVGVARWQNKPIFIAGVLPDEIVDVKVIEQKSKYARAKLIS. Positions 82, 88, 91, and 178 each coordinate [4Fe-4S] cluster. Positions 300, 329, 334, 350, 377, and 399 each coordinate S-adenosyl-L-methionine. Cysteine 425 acts as the Nucleophile in catalysis.

Belongs to the class I-like SAM-binding methyltransferase superfamily. RNA M5U methyltransferase family. RlmD subfamily.

It catalyses the reaction uridine(1939) in 23S rRNA + S-adenosyl-L-methionine = 5-methyluridine(1939) in 23S rRNA + S-adenosyl-L-homocysteine + H(+). Its function is as follows. Catalyzes the formation of 5-methyl-uridine at position 1939 (m5U1939) in 23S rRNA. The polypeptide is 23S rRNA (uracil(1939)-C(5))-methyltransferase RlmD (Colwellia psychrerythraea (strain 34H / ATCC BAA-681) (Vibrio psychroerythus)).